A 367-amino-acid polypeptide reads, in one-letter code: Leu/Ile/Val-binding protein (367 aa).

Positions 1–23 (MNIKGKALLAGCIALAFSNMALA) are cleaved as a signal peptide. The cysteines at positions 76 and 101 are disulfide-linked.

This sequence belongs to the leucine-binding protein family.

Its subcellular location is the periplasm. In terms of biological role, this protein is a component of the leucine, isoleucine, valine, (threonine) transport system, which is one of the two periplasmic binding protein-dependent transport systems of the high-affinity transport of the branched-chain amino acids. The chain is Leu/Ile/Val-binding protein (livJ) from Escherichia coli O157:H7.